The primary structure comprises 116 residues: NADH-ubiquinone oxidoreductase chain 3 (116 aa).

A run of 3 helical transmembrane segments spans residues 3–23 (LVIS…VVSF), 56–76 (FFLV…LLAL), and 85–105 (ATGT…GLIY).

This sequence belongs to the complex I subunit 3 family.

It is found in the mitochondrion membrane. The catalysed reaction is a ubiquinone + NADH + 5 H(+)(in) = a ubiquinol + NAD(+) + 4 H(+)(out). Functionally, core subunit of the mitochondrial membrane respiratory chain NADH dehydrogenase (Complex I) that is believed to belong to the minimal assembly required for catalysis. Complex I functions in the transfer of electrons from NADH to the respiratory chain. The immediate electron acceptor for the enzyme is believed to be ubiquinone. This chain is NADH-ubiquinone oxidoreductase chain 3 (MT-ND3), found in Formosania lacustris (Oriental stream loach).